A 476-amino-acid polypeptide reads, in one-letter code: Undecaprenyl-phosphate galactose phosphotransferase (476 aa).

Transmembrane regions (helical) follow at residues 15–35 (IFLA…SLGC), 52–72 (LDTR…WFWI), 93–113 (TIVI…WQFS), 115–135 (YVWV…RALT), and 283–303 (FDIV…IYLW). Residues 304–476 (YKVTRDGGPA…KVVLRRDGAY (173 aa)) lie on the Cytoplasmic side of the membrane.

It belongs to the bacterial sugar transferase family.

The protein resides in the cell inner membrane. The catalysed reaction is di-trans,octa-cis-undecaprenyl phosphate + UDP-alpha-D-galactose = alpha-D-galactosyl-di-trans,octa-cis-undecaprenyl diphosphate + UMP. The protein operates within bacterial outer membrane biogenesis; LPS O-antigen biosynthesis. Is responsible for transferring galactose-1-phosphate to the lipid precursor undecaprenol phosphate in the first steps of O-polysaccharide biosynthesis. The sequence is that of Undecaprenyl-phosphate galactose phosphotransferase (rfbP) from Salmonella typhimurium (strain LT2 / SGSC1412 / ATCC 700720).